We begin with the raw amino-acid sequence, 244 residues long: 1-(5-phosphoribosyl)-5-[(5-phosphoribosylamino)methylideneamino] imidazole-4-carboxamide isomerase (244 aa).

The active-site Proton acceptor is Asp9. Asp131 acts as the Proton donor in catalysis.

This sequence belongs to the HisA/HisF family.

Its subcellular location is the cytoplasm. The catalysed reaction is 1-(5-phospho-beta-D-ribosyl)-5-[(5-phospho-beta-D-ribosylamino)methylideneamino]imidazole-4-carboxamide = 5-[(5-phospho-1-deoxy-D-ribulos-1-ylimino)methylamino]-1-(5-phospho-beta-D-ribosyl)imidazole-4-carboxamide. It functions in the pathway amino-acid biosynthesis; L-histidine biosynthesis; L-histidine from 5-phospho-alpha-D-ribose 1-diphosphate: step 4/9. The chain is 1-(5-phosphoribosyl)-5-[(5-phosphoribosylamino)methylideneamino] imidazole-4-carboxamide isomerase from Campylobacter jejuni subsp. jejuni serotype O:6 (strain 81116 / NCTC 11828).